Here is a 481-residue protein sequence, read N- to C-terminus: 3-isopropylmalate dehydratase large subunit (481 aa).

3 residues coordinate [4Fe-4S] cluster: Cys363, Cys423, and Cys426. A disordered region spans residues 432-459 (DQLKPGERSASTSNRNFEGRQGPGGRTH).

The protein belongs to the aconitase/IPM isomerase family. LeuC type 1 subfamily. As to quaternary structure, heterodimer of LeuC and LeuD. [4Fe-4S] cluster is required as a cofactor.

It catalyses the reaction (2R,3S)-3-isopropylmalate = (2S)-2-isopropylmalate. It functions in the pathway amino-acid biosynthesis; L-leucine biosynthesis; L-leucine from 3-methyl-2-oxobutanoate: step 2/4. Functionally, catalyzes the isomerization between 2-isopropylmalate and 3-isopropylmalate, via the formation of 2-isopropylmaleate. This Corynebacterium glutamicum (strain ATCC 13032 / DSM 20300 / JCM 1318 / BCRC 11384 / CCUG 27702 / LMG 3730 / NBRC 12168 / NCIMB 10025 / NRRL B-2784 / 534) protein is 3-isopropylmalate dehydratase large subunit.